The following is a 207-amino-acid chain: Putative 3-methyladenine DNA glycosylase (207 aa).

The protein belongs to the DNA glycosylase MPG family.

The polypeptide is Putative 3-methyladenine DNA glycosylase (Listeria monocytogenes serotype 4a (strain HCC23)).